The chain runs to 346 residues: Methylthioribose-1-phosphate isomerase (346 aa).

Residues 46 to 48 (RGA), R89, and Q196 each bind substrate. D237 functions as the Proton donor in the catalytic mechanism. 247 to 248 (NK) is a binding site for substrate.

It belongs to the eIF-2B alpha/beta/delta subunits family. MtnA subfamily.

The enzyme catalyses 5-(methylsulfanyl)-alpha-D-ribose 1-phosphate = 5-(methylsulfanyl)-D-ribulose 1-phosphate. Its pathway is amino-acid biosynthesis; L-methionine biosynthesis via salvage pathway; L-methionine from S-methyl-5-thio-alpha-D-ribose 1-phosphate: step 1/6. In terms of biological role, catalyzes the interconversion of methylthioribose-1-phosphate (MTR-1-P) into methylthioribulose-1-phosphate (MTRu-1-P). The polypeptide is Methylthioribose-1-phosphate isomerase (Geobacter sulfurreducens (strain ATCC 51573 / DSM 12127 / PCA)).